Reading from the N-terminus, the 60-residue chain is Large ribosomal subunit protein bL33 (60 aa).

It belongs to the bacterial ribosomal protein bL33 family.

The sequence is that of Large ribosomal subunit protein bL33 from Chlorobaculum tepidum (strain ATCC 49652 / DSM 12025 / NBRC 103806 / TLS) (Chlorobium tepidum).